Consider the following 466-residue polypeptide: ATP synthase subunit beta (466 aa).

155-162 (GGAGVGKT) is an ATP binding site.

It belongs to the ATPase alpha/beta chains family. F-type ATPases have 2 components, CF(1) - the catalytic core - and CF(0) - the membrane proton channel. CF(1) has five subunits: alpha(3), beta(3), gamma(1), delta(1), epsilon(1). CF(0) has three main subunits: a(1), b(2) and c(9-12). The alpha and beta chains form an alternating ring which encloses part of the gamma chain. CF(1) is attached to CF(0) by a central stalk formed by the gamma and epsilon chains, while a peripheral stalk is formed by the delta and b chains.

It localises to the cell inner membrane. It catalyses the reaction ATP + H2O + 4 H(+)(in) = ADP + phosphate + 5 H(+)(out). Produces ATP from ADP in the presence of a proton gradient across the membrane. The catalytic sites are hosted primarily by the beta subunits. This chain is ATP synthase subunit beta, found in Bordetella bronchiseptica (strain ATCC BAA-588 / NCTC 13252 / RB50) (Alcaligenes bronchisepticus).